The following is a 59-amino-acid chain: Large ribosomal subunit protein uL30 (59 aa).

Belongs to the universal ribosomal protein uL30 family. Part of the 50S ribosomal subunit.

The protein is Large ribosomal subunit protein uL30 of Solibacter usitatus (strain Ellin6076).